Reading from the N-terminus, the 289-residue chain is ATP phosphoribosyltransferase (289 aa).

This sequence belongs to the ATP phosphoribosyltransferase family. Long subfamily. Requires Mg(2+) as cofactor.

Its subcellular location is the cytoplasm. It carries out the reaction 1-(5-phospho-beta-D-ribosyl)-ATP + diphosphate = 5-phospho-alpha-D-ribose 1-diphosphate + ATP. The protein operates within amino-acid biosynthesis; L-histidine biosynthesis; L-histidine from 5-phospho-alpha-D-ribose 1-diphosphate: step 1/9. With respect to regulation, feedback inhibited by histidine. Its function is as follows. Catalyzes the condensation of ATP and 5-phosphoribose 1-diphosphate to form N'-(5'-phosphoribosyl)-ATP (PR-ATP). Has a crucial role in the pathway because the rate of histidine biosynthesis seems to be controlled primarily by regulation of HisG enzymatic activity. The protein is ATP phosphoribosyltransferase of Koribacter versatilis (strain Ellin345).